Reading from the N-terminus, the 193-residue chain is Anthranilate synthase component 2 (193 aa).

The Glutamine amidotransferase type-1 domain maps to 3–193 (NILFLDNFDS…QQSIEWLLNR (191 aa)). 57–59 (GPG) is a binding site for L-glutamine. Cys84 (nucleophile; for GATase activity) is an active-site residue. L-glutamine contacts are provided by residues Gln88 and 134–135 (SL). Catalysis depends on for GATase activity residues His170 and Glu172.

Heterotetramer consisting of two non-identical subunits: a beta subunit (TrpG) and a large alpha subunit (TrpE).

The catalysed reaction is chorismate + L-glutamine = anthranilate + pyruvate + L-glutamate + H(+). It functions in the pathway amino-acid biosynthesis; L-tryptophan biosynthesis; L-tryptophan from chorismate: step 1/5. Its function is as follows. Part of a heterotetrameric complex that catalyzes the two-step biosynthesis of anthranilate, an intermediate in the biosynthesis of L-tryptophan. In the first step, the glutamine-binding beta subunit (TrpG) of anthranilate synthase (AS) provides the glutamine amidotransferase activity which generates ammonia as a substrate that, along with chorismate, is used in the second step, catalyzed by the large alpha subunit of AS (TrpE) to produce anthranilate. In the absence of TrpG, TrpE can synthesize anthranilate directly from chorismate and high concentrations of ammonia. The sequence is that of Anthranilate synthase component 2 (trpG) from Haemophilus influenzae (strain ATCC 51907 / DSM 11121 / KW20 / Rd).